A 248-amino-acid polypeptide reads, in one-letter code: Large ribosomal subunit protein uL30A (248 aa).

The disordered stretch occupies residues 1–44; that stretch reads MSQKKQKIQVEQKVPENVAKKTQRDSKLRDAVAKRRTERLAANK. Positions 8 to 41 are enriched in basic and acidic residues; the sequence is IQVEQKVPENVAKKTQRDSKLRDAVAKRRTERLA.

It belongs to the universal ribosomal protein uL30 family.

Functionally, binds to G-rich structures in 28S rRNA and in mRNAs. Plays a regulatory role in the translation apparatus; inhibits cell-free translation of mRNAs. This Paramecium tetraurelia protein is Large ribosomal subunit protein uL30A (Rpl7-1).